Consider the following 436-residue polypeptide: Homeobox protein PKNOX1 (436 aa).

The disordered stretch occupies residues L24 to T49. A phosphoserine mark is found at S33 and S41. The region spanning G80–E163 is the MEIS N-terminal domain. The segment at residues S259–M321 is a DNA-binding region (homeobox; TALE-type). A disordered region spans residues A401–Q436.

The protein belongs to the TALE/MEIS homeobox family. Interacts with MN1.

The protein localises to the nucleus. Functionally, activates transcription in the presence of PBX1A and HOXA1. This chain is Homeobox protein PKNOX1, found in Bos taurus (Bovine).